We begin with the raw amino-acid sequence, 224 residues long: C-&gt;U-editing enzyme APOBEC-2 (224 aa).

The tract at residues 1-23 is disordered; it reads MAQKEEAAEAAAPASQNGDDLEN. Zn(2+) contacts are provided by glutamate 60 and histidine 98. Residues 64 to 169 enclose the CMP/dCMP-type deaminase domain; that stretch reads GRNKTFLCYV…PEVQAALKKL (106 aa). Glutamate 100 serves as the catalytic Proton donor. 2 residues coordinate Zn(2+): cysteine 128 and cysteine 131.

The protein belongs to the cytidine and deoxycytidylate deaminase family. As to quaternary structure, homotetramer. The cofactor is Zn(2+). In terms of tissue distribution, expressed exclusively in heart and skeletal muscle.

The enzyme catalyses cytidine(6666) in apoB mRNA + H2O + H(+) = uridine(6666) in apoB mRNA + NH4(+). Functionally, probable C to U editing enzyme whose physiological substrate is not yet known. Does not display detectable apoB mRNA editing. Has a low intrinsic cytidine deaminase activity. May play a role in the epigenetic regulation of gene expression through the process of active DNA demethylation. The sequence is that of C-&gt;U-editing enzyme APOBEC-2 (Apobec2) from Mus musculus (Mouse).